The following is a 213-amino-acid chain: Large ribosomal subunit protein uL1 (213 aa).

It belongs to the universal ribosomal protein uL1 family. As to quaternary structure, part of the 50S ribosomal subunit.

Functionally, binds directly to 23S rRNA. Probably involved in E site tRNA release. Its function is as follows. Protein L1 is also a translational repressor protein, it controls the translation of its operon by binding to its mRNA. The sequence is that of Large ribosomal subunit protein uL1 from Methanoculleus marisnigri (strain ATCC 35101 / DSM 1498 / JR1).